The following is an 84-amino-acid chain: Cell division topological specificity factor (84 aa).

The protein belongs to the MinE family.

Its function is as follows. Prevents the cell division inhibition by proteins MinC and MinD at internal division sites while permitting inhibition at polar sites. This ensures cell division at the proper site by restricting the formation of a division septum at the midpoint of the long axis of the cell. The polypeptide is Cell division topological specificity factor (Pseudomonas fluorescens (strain ATCC BAA-477 / NRRL B-23932 / Pf-5)).